Here is a 421-residue protein sequence, read N- to C-terminus: UDP-N-acetylglucosamine 1-carboxyvinyltransferase (421 aa).

22–23 (KN) is a binding site for phosphoenolpyruvate. R93 is a binding site for UDP-N-acetyl-alpha-D-glucosamine. C117 (proton donor) is an active-site residue. Position 117 is a 2-(S-cysteinyl)pyruvic acid O-phosphothioketal (C117). Residues 122–126 (RPVDL), D308, and I330 contribute to the UDP-N-acetyl-alpha-D-glucosamine site.

This sequence belongs to the EPSP synthase family. MurA subfamily.

It is found in the cytoplasm. The catalysed reaction is phosphoenolpyruvate + UDP-N-acetyl-alpha-D-glucosamine = UDP-N-acetyl-3-O-(1-carboxyvinyl)-alpha-D-glucosamine + phosphate. Its pathway is cell wall biogenesis; peptidoglycan biosynthesis. Functionally, cell wall formation. Adds enolpyruvyl to UDP-N-acetylglucosamine. In Pseudomonas savastanoi pv. phaseolicola (strain 1448A / Race 6) (Pseudomonas syringae pv. phaseolicola (strain 1448A / Race 6)), this protein is UDP-N-acetylglucosamine 1-carboxyvinyltransferase.